The following is a 648-amino-acid chain: 1-deoxy-D-xylulose-5-phosphate synthase (648 aa).

Residues histidine 74 and 115-117 (GHA) each bind thiamine diphosphate. Aspartate 146 provides a ligand contact to Mg(2+). Residues 147 to 148 (GA), asparagine 176, tyrosine 292, and glutamate 375 contribute to the thiamine diphosphate site. Mg(2+) is bound at residue asparagine 176.

The protein belongs to the transketolase family. DXPS subfamily. In terms of assembly, homodimer. It depends on Mg(2+) as a cofactor. Requires thiamine diphosphate as cofactor.

The catalysed reaction is D-glyceraldehyde 3-phosphate + pyruvate + H(+) = 1-deoxy-D-xylulose 5-phosphate + CO2. It participates in metabolic intermediate biosynthesis; 1-deoxy-D-xylulose 5-phosphate biosynthesis; 1-deoxy-D-xylulose 5-phosphate from D-glyceraldehyde 3-phosphate and pyruvate: step 1/1. Its function is as follows. Catalyzes the acyloin condensation reaction between C atoms 2 and 3 of pyruvate and glyceraldehyde 3-phosphate to yield 1-deoxy-D-xylulose-5-phosphate (DXP). The chain is 1-deoxy-D-xylulose-5-phosphate synthase from Synechococcus sp. (strain JA-2-3B'a(2-13)) (Cyanobacteria bacterium Yellowstone B-Prime).